We begin with the raw amino-acid sequence, 301 residues long: F-box protein At4g02733 (301 aa).

The F-box domain maps to 91–146 (NSISWFLPSELTVKVFSMVDTKSLMQASACCTMFNNCAMDPLCYFHIDLTKAFKHV).

This Arabidopsis thaliana (Mouse-ear cress) protein is F-box protein At4g02733.